The following is a 565-amino-acid chain: Arginine--tRNA ligase (565 aa).

The 'HIGH' region signature appears at 120–130 (PNIAKPFHVGH).

The protein belongs to the class-I aminoacyl-tRNA synthetase family. As to quaternary structure, monomer.

It is found in the cytoplasm. It carries out the reaction tRNA(Arg) + L-arginine + ATP = L-arginyl-tRNA(Arg) + AMP + diphosphate. The protein is Arginine--tRNA ligase of Clostridium perfringens (strain 13 / Type A).